The sequence spans 239 residues: tRNA (guanine-N(7)-)-methyltransferase (239 aa).

4 residues coordinate S-adenosyl-L-methionine: Glu-69, Glu-94, Asp-121, and Asp-144. The active site involves Asp-144. Position 148 (Lys-148) interacts with substrate. Residues 150-155 (RHNKRR) are interaction with RNA. Substrate is bound by residues Asp-180 and 217-220 (TKFE).

Belongs to the class I-like SAM-binding methyltransferase superfamily. TrmB family. Monomer.

It carries out the reaction guanosine(46) in tRNA + S-adenosyl-L-methionine = N(7)-methylguanosine(46) in tRNA + S-adenosyl-L-homocysteine. Its pathway is tRNA modification; N(7)-methylguanine-tRNA biosynthesis. In terms of biological role, catalyzes the formation of N(7)-methylguanine at position 46 (m7G46) in tRNA. This Photorhabdus laumondii subsp. laumondii (strain DSM 15139 / CIP 105565 / TT01) (Photorhabdus luminescens subsp. laumondii) protein is tRNA (guanine-N(7)-)-methyltransferase.